The chain runs to 128 residues: Serum amyloid A-4 protein (128 aa).

An N-terminal signal peptide occupies residues 1–18; sequence MKLFIGLIFCSLVMGVSS. The tract at residues 93 to 128 is disordered; it reads SSEREEDQVSNRRAEEWGRSGQDPDHFRPAGLPKKY. Residues 99–120 show a composition bias toward basic and acidic residues; sequence DQVSNRRAEEWGRSGQDPDHFR.

The protein belongs to the SAA family. As to quaternary structure, apolipoprotein of the HDL complex.

The protein localises to the secreted. Functionally, major acute phase reactant. This Sus scrofa (Pig) protein is Serum amyloid A-4 protein.